Reading from the N-terminus, the 213-residue chain is Orotate phosphoribosyltransferase (213 aa).

Lys-26 contributes to the 5-phospho-alpha-D-ribose 1-diphosphate binding site. An orotate-binding site is contributed by 34 to 35; it reads FF. 5-phospho-alpha-D-ribose 1-diphosphate is bound by residues 72-73, Arg-99, Lys-100, Lys-103, His-105, and 124-132; these read YK and DDVITAGTA. Positions 128 and 156 each coordinate orotate.

Belongs to the purine/pyrimidine phosphoribosyltransferase family. PyrE subfamily. Homodimer. Mg(2+) is required as a cofactor.

The catalysed reaction is orotidine 5'-phosphate + diphosphate = orotate + 5-phospho-alpha-D-ribose 1-diphosphate. Its pathway is pyrimidine metabolism; UMP biosynthesis via de novo pathway; UMP from orotate: step 1/2. Functionally, catalyzes the transfer of a ribosyl phosphate group from 5-phosphoribose 1-diphosphate to orotate, leading to the formation of orotidine monophosphate (OMP). This Pseudomonas paraeruginosa (strain DSM 24068 / PA7) (Pseudomonas aeruginosa (strain PA7)) protein is Orotate phosphoribosyltransferase.